The sequence spans 62 residues: Phycobilisome degradation protein NblA homolog 1 (62 aa).

It to Synechococcus PCC 7942 NblA and some, to chloroplast ycf18.

The sequence is that of Phycobilisome degradation protein NblA homolog 1 from Synechocystis sp. (strain ATCC 27184 / PCC 6803 / Kazusa).